We begin with the raw amino-acid sequence, 47 residues long: Protein RL9A (47 aa).

A helical membrane pass occupies residues 27–47 (CMIIVIMIAISIWILTYVLFL).

It is found in the host membrane. The polypeptide is Protein RL9A (RL9A) (Human cytomegalovirus (strain Merlin) (HHV-5)).